Consider the following 538-residue polypeptide: Bifunctional purine biosynthesis protein PurH (538 aa).

Residues 8 to 158 form the MGS-like domain; it reads IPAPDKVEIK…KNHAYVTILT (151 aa).

This sequence belongs to the PurH family.

It catalyses the reaction (6R)-10-formyltetrahydrofolate + 5-amino-1-(5-phospho-beta-D-ribosyl)imidazole-4-carboxamide = 5-formamido-1-(5-phospho-D-ribosyl)imidazole-4-carboxamide + (6S)-5,6,7,8-tetrahydrofolate. The catalysed reaction is IMP + H2O = 5-formamido-1-(5-phospho-D-ribosyl)imidazole-4-carboxamide. It functions in the pathway purine metabolism; IMP biosynthesis via de novo pathway; 5-formamido-1-(5-phospho-D-ribosyl)imidazole-4-carboxamide from 5-amino-1-(5-phospho-D-ribosyl)imidazole-4-carboxamide (10-formyl THF route): step 1/1. It participates in purine metabolism; IMP biosynthesis via de novo pathway; IMP from 5-formamido-1-(5-phospho-D-ribosyl)imidazole-4-carboxamide: step 1/1. This chain is Bifunctional purine biosynthesis protein PurH, found in Rhizobium etli (strain CIAT 652).